The following is a 78-amino-acid chain: D-alanyl carrier protein (78 aa).

Residues 1–77 form the Carrier domain; that stretch reads MDLKEQIVEI…KVVAKVESLI (77 aa). Ser-35 bears the O-(pantetheine 4'-phosphoryl)serine mark.

Belongs to the DltC family. In terms of processing, 4'-phosphopantetheine is transferred from CoA to a specific serine of apo-DCP.

The protein localises to the cytoplasm. It functions in the pathway cell wall biogenesis; lipoteichoic acid biosynthesis. In terms of biological role, carrier protein involved in the D-alanylation of lipoteichoic acid (LTA). The loading of thioester-linked D-alanine onto DltC is catalyzed by D-alanine--D-alanyl carrier protein ligase DltA. The DltC-carried D-alanyl group is further transferred to cell membrane phosphatidylglycerol (PG) by forming an ester bond, probably catalyzed by DltD. D-alanylation of LTA plays an important role in modulating the properties of the cell wall in Gram-positive bacteria, influencing the net charge of the cell wall. This is D-alanyl carrier protein from Leuconostoc mesenteroides subsp. mesenteroides (strain ATCC 8293 / DSM 20343 / BCRC 11652 / CCM 1803 / JCM 6124 / NCDO 523 / NBRC 100496 / NCIMB 8023 / NCTC 12954 / NRRL B-1118 / 37Y).